The following is a 452-amino-acid chain: MEVATDQPRWMAHHAVLNGQHPDSHHPGLAHNYMEPTQLLPPDEVDVFFNHLDSQGNPYYANSAHARARVSYSQAHARLTGSQMCRPHLLHSPGLPWLESGKTALSAAHHHNPWTVSPFGKAPLHPAARGGSLYPGTGSSACPSSSHSSPHLFGFPPTPPKDVSPDPGPASPPSSSRLEDKDSIKYQMSLSEGMKMEGGSPLRSSLAPMGTQCSTHHPIPTYPSYVPAAHDYSSGLFHPGSLLGGPASSFTPKQRSKSRSCSEGRECVNCGATATPLWRRDGTGHYLCNACGLYHKMNGQNRPLIKPKRRLSAARRAGTCCANCQTSTTTLWRRNANGDPVCNACGLYYKLHNVNRPLTMKKEGIQTRNRKMSNKSKKNKKGSECFEELSRCMQEKSSPFSAAALASHMAPMGHLAPFSHSGHILQTPTPIHPSSSLSFGHPHHSSMVTAMG.

Residues 130-182 (GGSLYPGTGSSACPSSSHSSPHLFGFPPTPPKDVSPDPGPASPPSSSRLEDKD) are disordered. A compositionally biased stretch (low complexity) spans 139 to 151 (SSACPSSSHSSPH). Residues 156–172 (PPTPPKDVSPDPGPASP) are compositionally biased toward pro residues. 2 GATA-type zinc fingers span residues 267–291 (CVNC…CNAC) and 321–345 (CANC…CNAC). A compositionally biased stretch (polar residues) spans 426–438 (QTPTPIHPSSSLS). Residues 426–452 (QTPTPIHPSSSLSFGHPHHSSMVTAMG) are disordered.

As to expression, expressed in the developing ventral blood island, and in the embryonic nervous system.

It is found in the nucleus. The sequence is that of GATA-binding factor 2 (gata2) from Xenopus laevis (African clawed frog).